A 1108-amino-acid chain; its full sequence is Ubiquitin carboxyl-terminal hydrolase 5 (1108 aa).

The MATH domain occupies 55 to 187 (FQRFTWHIKS…DGALLLTAYV (133 aa)). Residues Cys-120 and Cys-222 each act as nucleophile in the active site. The 316-residue stretch at 213 to 528 (VGLKNQGATC…SAYMLLYLRK (316 aa)) folds into the USP domain. Residue His-464 is the Proton acceptor of the active site.

Belongs to the peptidase C19 family.

Its subcellular location is the nucleus. The enzyme catalyses Thiol-dependent hydrolysis of ester, thioester, amide, peptide and isopeptide bonds formed by the C-terminal Gly of ubiquitin (a 76-residue protein attached to proteins as an intracellular targeting signal).. Hydrolase that deubiquitinates target proteins. Cleaves the UBL propeptide in sde2. In Schizosaccharomyces pombe (strain 972 / ATCC 24843) (Fission yeast), this protein is Ubiquitin carboxyl-terminal hydrolase 5 (ubp5).